A 419-amino-acid polypeptide reads, in one-letter code: Serine hydroxymethyltransferase 2 (419 aa).

(6S)-5,6,7,8-tetrahydrofolate contacts are provided by residues Leu120 and 124–126 (GHL). Lys229 bears the N6-(pyridoxal phosphate)lysine mark.

Belongs to the SHMT family. In terms of assembly, homodimer. The cofactor is pyridoxal 5'-phosphate.

The protein localises to the cytoplasm. It catalyses the reaction (6R)-5,10-methylene-5,6,7,8-tetrahydrofolate + glycine + H2O = (6S)-5,6,7,8-tetrahydrofolate + L-serine. It functions in the pathway one-carbon metabolism; tetrahydrofolate interconversion. The protein operates within amino-acid biosynthesis; glycine biosynthesis; glycine from L-serine: step 1/1. In terms of biological role, catalyzes the reversible interconversion of serine and glycine with tetrahydrofolate (THF) serving as the one-carbon carrier. This reaction serves as the major source of one-carbon groups required for the biosynthesis of purines, thymidylate, methionine, and other important biomolecules. Also exhibits THF-independent aldolase activity toward beta-hydroxyamino acids, producing glycine and aldehydes, via a retro-aldol mechanism. The protein is Serine hydroxymethyltransferase 2 of Salmonella typhi.